The chain runs to 206 residues: Flavin prenyltransferase UbiX (206 aa).

Residues 14 to 16 (GAS), Thr40, 101 to 104 (SMGT), and Arg136 contribute to the FMN site. Tyr166 and Lys182 together coordinate dimethylallyl phosphate.

It belongs to the UbiX/PAD1 family.

It catalyses the reaction dimethylallyl phosphate + FMNH2 = prenylated FMNH2 + phosphate. In terms of biological role, flavin prenyltransferase that catalyzes the synthesis of the prenylated FMN cofactor (prenyl-FMN) for 4-hydroxy-3-polyprenylbenzoic acid decarboxylase UbiD. The prenyltransferase is metal-independent and links a dimethylallyl moiety from dimethylallyl monophosphate (DMAP) to the flavin N5 and C6 atoms of FMN. This Halalkalibacterium halodurans (strain ATCC BAA-125 / DSM 18197 / FERM 7344 / JCM 9153 / C-125) (Bacillus halodurans) protein is Flavin prenyltransferase UbiX.